The primary structure comprises 192 residues: T-cell surface glycoprotein CD3 epsilon chain (192 aa).

An N-terminal signal peptide occupies residues 1 to 21 (MQSGNLWRALGLCLLLVGAWA). Over 23–114 (DADEQKPYEV…QNCMEVNLME (92 aa)) the chain is Extracellular. Residues 26 to 97 (EQKPYEVSIS…EGNKEAAHTL (72 aa)) form the Ig-like domain. The cysteines at positions 43 and 84 are disulfide-linked. Asn-72 carries an N-linked (GlcNAc...) asparagine glycan. The helical transmembrane segment at 115–135 (VATIIVVDICVTLGLLLLVYY) threads the bilayer. The Cytoplasmic portion of the chain corresponds to 136 to 192 (WSKSRKAKASPMTRGAGAGGRPRGQNKGRPPPVPNPDYEPIRKGQRDLYAGLNQRGV). The interval 145–180 (SPMTRGAGAGGRPRGQNKGRPPPVPNPDYEPIRKGQ) is disordered. An NUMB-binding region region spans residues 160–177 (QNKGRPPPVPNPDYEPIR). An ITAM domain is found at 163–190 (GRPPPVPNPDYEPIRKGQRDLYAGLNQR). The segment at 164-171 (RPPPVPNP) is proline-rich sequence. Phosphotyrosine occurs at positions 173 and 184.

The TCR-CD3 complex is composed of a CD3D/CD3E and a CD3G/CD3E heterodimers that preferentially associate with TCRalpha and TCRbeta, respectively, to form TCRalpha/CD3E/CD3G and TCRbeta/CD3G/CD3E trimers. In turn, the hexamer interacts with CD3Z homodimer to form the TCR-CD3 complex. Alternatively, TCRalpha and TCRbeta can be replaced by TCRgamma and TCRdelta. Interacts with CD6. Interacts (via Proline-rich sequence) with NCK1; the interaction is ligand dependent but independent of tyrosine kinase activation. In terms of processing, phosphorylated on Tyr residues after T-cell receptor triggering by LCK in association with CD4/CD8.

The protein localises to the cell membrane. Functionally, part of the TCR-CD3 complex present on T-lymphocyte cell surface that plays an essential role in adaptive immune response. When antigen presenting cells (APCs) activate T-cell receptor (TCR), TCR-mediated signals are transmitted across the cell membrane by the CD3 chains CD3D, CD3E, CD3G and CD3Z. All CD3 chains contain immunoreceptor tyrosine-based activation motifs (ITAMs) in their cytoplasmic domain. Upon TCR engagement, these motifs become phosphorylated by Src family protein tyrosine kinases LCK and FYN, resulting in the activation of downstream signaling pathways. In addition of this role of signal transduction in T-cell activation, CD3E plays an essential role in correct T-cell development. Also participates in internalization and cell surface down-regulation of TCR-CD3 complexes via endocytosis sequences present in CD3E cytosolic region. In addition to its role as a TCR coreceptor, it serves as a receptor for ITPRIPL1. Ligand recognition inhibits T-cell activation by promoting interaction with NCK1, which prevents CD3E-ZAP70 interaction and blocks the ERK-NFkB signaling cascade and calcium influx. In Bos taurus (Bovine), this protein is T-cell surface glycoprotein CD3 epsilon chain (CD3E).